Consider the following 66-residue polypeptide: Gallinacin-8 (66 aa).

Residues 1–19 (MKILYLLLAVLLTVLQSSL) form the signal peptide. Residues 20 to 25 (GFMRVP) constitute a propeptide that is removed on maturation. 3 disulfides stabilise this stretch: cysteine 31/cysteine 60, cysteine 38/cysteine 54, and cysteine 43/cysteine 61.

This sequence belongs to the beta-defensin family. Expressed in the liver, kidney, gall bladder, testis, ovary and male and femae reproductive tracts. Expressed in the ovarian stroma and the theca and granulosa layers of the ovarian follicle.

The protein resides in the secreted. Its subcellular location is the cytoplasmic granule. Has bactericidal activity. The sequence is that of Gallinacin-8 (GAL8) from Gallus gallus (Chicken).